Here is a 242-residue protein sequence, read N- to C-terminus: Ribonuclease PH (242 aa).

Residues arginine 89 and 127–129 contribute to the phosphate site; that span reads GTR.

It belongs to the RNase PH family. In terms of assembly, homohexameric ring arranged as a trimer of dimers.

The catalysed reaction is tRNA(n+1) + phosphate = tRNA(n) + a ribonucleoside 5'-diphosphate. Phosphorolytic 3'-5' exoribonuclease that plays an important role in tRNA 3'-end maturation. Removes nucleotide residues following the 3'-CCA terminus of tRNAs; can also add nucleotides to the ends of RNA molecules by using nucleoside diphosphates as substrates, but this may not be physiologically important. Probably plays a role in initiation of 16S rRNA degradation (leading to ribosome degradation) during starvation. This Neisseria gonorrhoeae (strain ATCC 700825 / FA 1090) protein is Ribonuclease PH.